Here is a 360-residue protein sequence, read N- to C-terminus: DNA replication and repair protein RecF (360 aa).

30-37 provides a ligand contact to ATP; that stretch reads GHNGSGKT.

Belongs to the RecF family.

It localises to the cytoplasm. The RecF protein is involved in DNA metabolism; it is required for DNA replication and normal SOS inducibility. RecF binds preferentially to single-stranded, linear DNA. It also seems to bind ATP. In Actinobacillus pleuropneumoniae serotype 7 (strain AP76), this protein is DNA replication and repair protein RecF.